A 168-amino-acid chain; its full sequence is ATP synthase subunit b, sodium ion specific (168 aa).

A helical transmembrane segment spans residues 9 to 29; sequence VSIDINMFWQIINFLILMFFF.

It belongs to the ATPase B chain family. In terms of assembly, F-type ATPases have 2 components, F(1) - the catalytic core - and F(0) - the membrane proton channel. F(1) has five subunits: alpha(3), beta(3), gamma(1), delta(1), epsilon(1). F(0) has three main subunits: a(1), b(2) and c(10-14). The alpha and beta chains form an alternating ring which encloses part of the gamma chain. F(1) is attached to F(0) by a central stalk formed by the gamma and epsilon chains, while a peripheral stalk is formed by the delta and b chains.

The protein localises to the cell inner membrane. Functionally, f(1)F(0) ATP synthase produces ATP from ADP in the presence of a proton or sodium gradient. F-type ATPases consist of two structural domains, F(1) containing the extramembraneous catalytic core and F(0) containing the membrane proton channel, linked together by a central stalk and a peripheral stalk. During catalysis, ATP synthesis in the catalytic domain of F(1) is coupled via a rotary mechanism of the central stalk subunits to proton translocation. In terms of biological role, component of the F(0) channel, it forms part of the peripheral stalk, linking F(1) to F(0). In Propionigenium modestum, this protein is ATP synthase subunit b, sodium ion specific (atpF).